Here is a 143-residue protein sequence, read N- to C-terminus: Transcriptional regulator MraZ (143 aa).

SpoVT-AbrB domains follow at residues 5 to 47 (EYKH…SLKE) and 76 to 119 (ACEC…SENN).

This sequence belongs to the MraZ family. As to quaternary structure, forms oligomers.

It localises to the cytoplasm. The protein localises to the nucleoid. This Caldicellulosiruptor bescii (strain ATCC BAA-1888 / DSM 6725 / KCTC 15123 / Z-1320) (Anaerocellum thermophilum) protein is Transcriptional regulator MraZ.